Consider the following 342-residue polypeptide: Ketol-acid reductoisomerase (NADP(+)) (342 aa).

The KARI N-terminal Rossmann domain maps to valine 2–threonine 181. NADP(+)-binding positions include tyrosine 25–glutamine 28, arginine 48, serine 52, and aspartate 82–glutamine 85. Residue histidine 107 is part of the active site. Glycine 133 is a binding site for NADP(+). The KARI C-terminal knotted domain maps to threonine 182 to valine 327. Mg(2+)-binding residues include aspartate 190, glutamate 194, glutamate 226, and glutamate 230. Residue serine 251 coordinates substrate.

This sequence belongs to the ketol-acid reductoisomerase family. Mg(2+) is required as a cofactor.

It catalyses the reaction (2R)-2,3-dihydroxy-3-methylbutanoate + NADP(+) = (2S)-2-acetolactate + NADPH + H(+). The enzyme catalyses (2R,3R)-2,3-dihydroxy-3-methylpentanoate + NADP(+) = (S)-2-ethyl-2-hydroxy-3-oxobutanoate + NADPH + H(+). Its pathway is amino-acid biosynthesis; L-isoleucine biosynthesis; L-isoleucine from 2-oxobutanoate: step 2/4. The protein operates within amino-acid biosynthesis; L-valine biosynthesis; L-valine from pyruvate: step 2/4. In terms of biological role, involved in the biosynthesis of branched-chain amino acids (BCAA). Catalyzes an alkyl-migration followed by a ketol-acid reduction of (S)-2-acetolactate (S2AL) to yield (R)-2,3-dihydroxy-isovalerate. In the isomerase reaction, S2AL is rearranged via a Mg-dependent methyl migration to produce 3-hydroxy-3-methyl-2-ketobutyrate (HMKB). In the reductase reaction, this 2-ketoacid undergoes a metal-dependent reduction by NADPH to yield (R)-2,3-dihydroxy-isovalerate. The polypeptide is Ketol-acid reductoisomerase (NADP(+)) (Bacillus licheniformis (strain ATCC 14580 / DSM 13 / JCM 2505 / CCUG 7422 / NBRC 12200 / NCIMB 9375 / NCTC 10341 / NRRL NRS-1264 / Gibson 46)).